The chain runs to 193 residues: Adenylate kinase (193 aa).

10–18 (GVPGVGGTT) is a binding site for ATP.

Belongs to the archaeal adenylate kinase family. As to quaternary structure, monomer.

The protein localises to the cytoplasm. The catalysed reaction is AMP + ATP = 2 ADP. This is Adenylate kinase from Methanococcus aeolicus (strain ATCC BAA-1280 / DSM 17508 / OCM 812 / Nankai-3).